The chain runs to 633 residues: Probable potassium transport system protein Kup (633 aa).

A run of 12 helical transmembrane segments spans residues 21–41, 61–81, 107–127, 145–165, 176–196, 219–239, 255–275, 293–313, 345–365, 371–391, 402–422, and 427–447; these read LAVG…LYAF, LVSL…VLFL, TAVL…DAMI, PTLS…LFAI, FFGP…IMHI, GFLG…AEAL, WFVL…ALVL, ALLP…QAVI, IFLP…VLSF, LATA…IMAF, LPMA…FLGA, and IHDG…IMWT.

It belongs to the HAK/KUP transporter (TC 2.A.72) family.

Its subcellular location is the cell inner membrane. It catalyses the reaction K(+)(in) + H(+)(in) = K(+)(out) + H(+)(out). In terms of biological role, transport of potassium into the cell. Likely operates as a K(+):H(+) symporter. This chain is Probable potassium transport system protein Kup, found in Rhizobium rhizogenes (strain K84 / ATCC BAA-868) (Agrobacterium radiobacter).